A 612-amino-acid polypeptide reads, in one-letter code: Zinc metalloproteinase-disintegrin-like berythractivase (612 aa).

The signal sequence occupies residues 1–20 (MIQVLLVIICLEAFPYQGSS). Residues 21–187 (IILESGNVND…EPIKKASLLN (167 aa)) constitute a propeptide that is removed on maturation. Positions 200-396 (KYVEFVVVLD…NRPQCLLNKP (197 aa)) constitute a Peptidase M12B domain. Residue Glu-203 participates in Ca(2+) binding. The N-linked (GlcNAc...) asparagine glycan is linked to Asn-260. Asp-287 serves as a coordination point for Ca(2+). 3 cysteine pairs are disulfide-bonded: Cys-311–Cys-391, Cys-351–Cys-375, and Cys-353–Cys-358. Residue His-336 participates in Zn(2+) binding. Residue Glu-337 is part of the active site. His-340 and His-346 together coordinate Zn(2+). A glycan (N-linked (GlcNAc...) asparagine) is linked at Asn-348. The N-linked (GlcNAc...) asparagine glycan is linked to Asn-374. Positions 391, 394, 406, 409, 411, 413, 416, and 419 each coordinate Ca(2+). The Disintegrin domain occupies 404 to 490 (PPVCGNELLE…DCPMDDFQRN (87 aa)). Disulfide bonds link Cys-407–Cys-436, Cys-418–Cys-431, Cys-420–Cys-426, Cys-430–Cys-453, Cys-444–Cys-450, Cys-449–Cys-475, Cys-462–Cys-482, Cys-469–Cys-501, Cys-494–Cys-506, Cys-513–Cys-563, Cys-528–Cys-574, Cys-541–Cys-551, Cys-558–Cys-600, and Cys-594–Cys-605. N-linked (GlcNAc...) asparagine glycosylation occurs at Asn-432. The D/ECD-tripeptide motif lies at 468–470 (DCD). Ca(2+)-binding residues include Asp-470, Leu-471, Glu-473, and Asp-485.

Belongs to the venom metalloproteinase (M12B) family. P-III subfamily. P-IIIa sub-subfamily. As to quaternary structure, monomer. Zn(2+) serves as cofactor. Post-translationally, highly glycosylated. As to expression, expressed by the venom gland.

It localises to the secreted. With respect to regulation, inhibited by EDTA and o-phenanthroline. Not inhibited by PMSF, benzamidine, irreversible serine-proteinase inhibitors and cysteine proteinase inhibitor E-64. Functionally, potent activator of prothrombin (F2). Does not elicit any hemorrhagic response. Barely inhibits collagen-induced platelet aggregation. Binds neither collagen, nor the jararhagin monoclonal antibody MAJar3. Hydrolyzes the Aalpha-chain of fibrin and fibrinogen, without affecting the Bbeta- and gamma-chains. Is capable of triggering endothelial pro-inflammatory and procoagulant cell responses, but fails to trigger apoptosis. Induces von Willebrand factor release, and the expression of both ICAM1 and E-selectin (SELE) (without increase in VCAM1) in endothelial cells (HUVEC). Is also able to up-regulate the synthesis of the coagulation factor TF (F3). Enhances nitric oxide (NO) generation, prostacyclin production and interleukin-8 release. In Bothrops erythromelas (Caatinga lance head), this protein is Zinc metalloproteinase-disintegrin-like berythractivase.